We begin with the raw amino-acid sequence, 503 residues long: MLKRFVNSIWEICQKDKFQRFTPVADAIDTFCYEPIHQASSPPFIRDAVDIKRWMMLVVIALFPATFLAIWNSGIQALVYGSGNAQLMEAFLHISGFRSYLSFIFNDIGMFSVLWTGCKIFLPLLIISYTVGGACEVLFAVIRKHKIAEGLLVTGILYPLTLPPTIPYWMAALGIAFGVVVSKELFGGTGMNILNPALSGRAFLFFTFPAKMSGDVWVGSNPTHIKDSLLTMNATAGKSIIDGFSQSTCLQTLNSTPPSVKRIHVDAIASNILHMTHVPTQNVIESQFSIWTESHPGLLLDKLTLEQLQSFVTSPLSEGGLGLLPTQFDSAYAITDVIYGIGKFSSGNLFWGNILGSLGETSTFACLLGAVFLVITGIASWRTMVSFGIGAFVTAWLFKICSILIAGKHGAWAPAKFFIPAYRQLFLGGLAFGLVFMATDPVSSPTMKLAKWIYGLFIGFMTIIIRLINPAYPEGVMLAILLGNVFAPLLDYFAVRKYRRRRI.

Transmembrane regions (helical) follow at residues 55-75, 120-140, 161-181, and 186-206; these read MMLV…NSGI, IFLP…VLFA, TLPP…GVVV, and FGGT…FLFF. The residue at position 248 (T248) is an FMN phosphoryl threonine. 5 consecutive transmembrane segments (helical) span residues 361 to 381, 387 to 407, 417 to 437, 452 to 472, and 475 to 495; these read TSTF…IASW, FGIG…LIAG, FFIP…LVFM, WIYG…NPAY, and GVML…YFAV.

It belongs to the NqrB/RnfD family. In terms of assembly, composed of six subunits; NqrA, NqrB, NqrC, NqrD, NqrE and NqrF. Requires FMN as cofactor.

Its subcellular location is the cell inner membrane. It carries out the reaction a ubiquinone + n Na(+)(in) + NADH + H(+) = a ubiquinol + n Na(+)(out) + NAD(+). In terms of biological role, NQR complex catalyzes the reduction of ubiquinone-1 to ubiquinol by two successive reactions, coupled with the transport of Na(+) ions from the cytoplasm to the periplasm. NqrA to NqrE are probably involved in the second step, the conversion of ubisemiquinone to ubiquinol. The chain is Na(+)-translocating NADH-quinone reductase subunit B from Chlamydia abortus (strain DSM 27085 / S26/3) (Chlamydophila abortus).